The primary structure comprises 207 residues: Small ribosomal subunit protein uS4 (207 aa).

In terms of domain architecture, S4 RNA-binding spans 96–156 (SRLDNTVYRM…KKSHKQSRIR (61 aa)).

Belongs to the universal ribosomal protein uS4 family. As to quaternary structure, part of the 30S ribosomal subunit. Contacts protein S5. The interaction surface between S4 and S5 is involved in control of translational fidelity.

One of the primary rRNA binding proteins, it binds directly to 16S rRNA where it nucleates assembly of the body of the 30S subunit. In terms of biological role, with S5 and S12 plays an important role in translational accuracy. This chain is Small ribosomal subunit protein uS4, found in Blochmanniella pennsylvanica (strain BPEN).